A 78-amino-acid chain; its full sequence is Conotoxin 5 (78 aa).

The first 22 residues, 1–22, serve as a signal peptide directing secretion; sequence MKLTCMMIVTVLFLTAWIFITA. A propeptide spanning residues 23–49 is cleaved from the precursor; the sequence is DNSRNGIENLPRMRRHEMKNPKASKLN. Disulfide bonds link C53–C69, C60–C73, and C68–C77.

The protein belongs to the conotoxin O1 superfamily. In terms of tissue distribution, expressed by the venom duct.

The protein resides in the secreted. The polypeptide is Conotoxin 5 (Conus imperialis (Imperial cone)).